A 352-amino-acid chain; its full sequence is MGSCINEEKLAKFFQRSLNALPAPYTSGLPNHLSLIFFVVSGLDLLNKTDILEKEKQDIINWVYSRQILPSKDNPEINLENCGFRGYNFLGQEFCCDKSVHTSENGPLEYDLPSTPNTYCALLILRILGDDFSGVNKKAIIDSLRKRQRESDGAISGSPNVGDYDLRHLFSACAISFILDDWSAINKESAIDYIKSCLSYEFAFGQTPQQEAHGGPTYCAIASLSLLGRLDVLEPFKEQLTFWLVKKQITGFCGRTNKDPDTCYAFWIGASLMMIDRYDLIDFASINAFIGSAQHEAIGGVAKEPGQLPDVMHSYLSLVGLSFGNIPSIQQVIPCLNLSKRAAGKDWFEKLI.

4 PFTB repeats span residues 135 to 180 (VNKK…FILD), 187 to 228 (KESA…SLLG), 236 to 276 (FKEQ…MMID), and 283 to 325 (FASI…SFGN). Geranylgeranyl diphosphate is bound by residues 213–215 (HGG) and 255–258 (RTNK). Zn(2+) contacts are provided by D261 and C263. Residue 264-267 (YAFW) participates in geranylgeranyl diphosphate binding. H313 serves as a coordination point for Zn(2+).

The protein belongs to the protein prenyltransferase subunit beta family. Heterodimer of an alpha and a beta subunit. Requires Zn(2+) as cofactor. Mg(2+) is required as a cofactor.

It carries out the reaction geranylgeranyl diphosphate + L-cysteinyl-[protein] = S-geranylgeranyl-L-cysteinyl-[protein] + diphosphate. Catalyzes the transfer of a geranyl-geranyl moiety from geranyl-geranyl pyrophosphate to a cysteine at the fourth position from the C-terminus of proteins having the C-terminal sequence Cys-aliphatic-aliphatic-X. This is Geranylgeranyl transferase type-1 subunit beta (pggt1b) from Dictyostelium discoideum (Social amoeba).